The sequence spans 630 residues: Phosphatidylinositol 4-kinase gamma 5 (630 aa).

The Ubiquitin-like; degenerate domain maps to 41–98; it reads RRVFVQTETGCVLGLELDRSDNAHTVKRKLQVALNFPIEESSLTFGDLVLKNDLTAVR. The region spanning 162–459 is the PI3K/PI4K catalytic domain; it reads GIDPVAVNSG…LIGEKDAESP (298 aa). Positions 168 to 174 are G-loop; it reads VNSGLGG. ATP-binding positions include 169–175, Lys-190, and 279–282; these read NSGLGGA and QQFI. The interval 312–320 is catalytic loop; sequence LNTDRHSGN. An activation loop region spans residues 339–365; sequence PIDHGLCLPETLEDPYFEWIHWPQASI. Asp-341 serves as a coordination point for ATP. A disordered region spans residues 500 to 527; the sequence is LSKVEETTEDGEEEEEEDREEEENDRAD. Acidic residues predominate over residues 506–524; it reads TTEDGEEEEEEDREEEEND. Ser-571 is subject to Phosphoserine.

Belongs to the PI3/PI4-kinase family. Type II PI4K subfamily. In terms of assembly, interacts with AHK2.

The enzyme catalyses a 1,2-diacyl-sn-glycero-3-phospho-(1D-myo-inositol) + ATP = a 1,2-diacyl-sn-glycero-3-phospho-(1D-myo-inositol 4-phosphate) + ADP + H(+). Functionally, the phosphorylation of phosphatidylinositol (PI) to PI4P is the first committed step in the generation of phosphatidylinositol 4,5-bisphosphate (PIP2), a precursor of the second messenger inositol 1,4,5-trisphosphate (InsP3). The protein is Phosphatidylinositol 4-kinase gamma 5 (PI4KG5) of Arabidopsis thaliana (Mouse-ear cress).